The chain runs to 34 residues: Photosystem II reaction center protein M (34 aa).

A helical membrane pass occupies residues 7 to 27 (GFVATLLFVLVPAIFLIILYI).

This sequence belongs to the PsbM family. As to quaternary structure, PSII is composed of 1 copy each of membrane proteins PsbA, PsbB, PsbC, PsbD, PsbE, PsbF, PsbH, PsbI, PsbJ, PsbK, PsbL, PsbM, PsbT, PsbX, PsbY, PsbZ, Psb30/Ycf12, peripheral proteins PsbO, CyanoQ (PsbQ), PsbU, PsbV and a large number of cofactors. It forms dimeric complexes.

The protein localises to the cellular thylakoid membrane. In terms of biological role, one of the components of the core complex of photosystem II (PSII). PSII is a light-driven water:plastoquinone oxidoreductase that uses light energy to abstract electrons from H(2)O, generating O(2) and a proton gradient subsequently used for ATP formation. It consists of a core antenna complex that captures photons, and an electron transfer chain that converts photonic excitation into a charge separation. This subunit is found at the monomer-monomer interface. The protein is Photosystem II reaction center protein M of Synechococcus sp. (strain RCC307).